Here is a 186-residue protein sequence, read N- to C-terminus: Ribosome-recycling factor (186 aa).

Belongs to the RRF family.

It is found in the cytoplasm. Responsible for the release of ribosomes from messenger RNA at the termination of protein biosynthesis. May increase the efficiency of translation by recycling ribosomes from one round of translation to another. In Allorhizobium ampelinum (strain ATCC BAA-846 / DSM 112012 / S4) (Agrobacterium vitis (strain S4)), this protein is Ribosome-recycling factor.